Consider the following 101-residue polypeptide: Urease subunit beta (101 aa).

Belongs to the urease beta subunit family. Heterotrimer of UreA (gamma), UreB (beta) and UreC (alpha) subunits. Three heterotrimers associate to form the active enzyme.

It localises to the cytoplasm. The catalysed reaction is urea + 2 H2O + H(+) = hydrogencarbonate + 2 NH4(+). The protein operates within nitrogen metabolism; urea degradation; CO(2) and NH(3) from urea (urease route): step 1/1. The protein is Urease subunit beta of Burkholderia vietnamiensis (strain G4 / LMG 22486) (Burkholderia cepacia (strain R1808)).